The following is a 180-amino-acid chain: Putative 3-methyladenine DNA glycosylase (180 aa).

It belongs to the DNA glycosylase MPG family.

The chain is Putative 3-methyladenine DNA glycosylase from Ehrlichia chaffeensis (strain ATCC CRL-10679 / Arkansas).